Consider the following 111-residue polypeptide: MICOS complex subunit MIC13 (111 aa).

Residues Val-8–Tyr-26 traverse the membrane as a helical segment.

Belongs to the MICOS complex subunit Mic13 family. In terms of assembly, component of the mitochondrial contact site and cristae organizing system (MICOS) complex.

The protein resides in the mitochondrion inner membrane. Component of the MICOS complex, a large protein complex of the mitochondrial inner membrane that plays crucial roles in the maintenance of crista junctions, inner membrane architecture, and formation of contact sites to the outer membrane. Constituent of mature MICOS complex, it is required for the formation of cristae junction (CJ) and maintenance of cristae morphology. Required for the incorporation of MIC10 into the MICOS complex. This Danio rerio (Zebrafish) protein is MICOS complex subunit MIC13.